The following is a 193-amino-acid chain: Urease accessory protein UreE (193 aa).

The disordered stretch occupies residues 138–193 (RGAYHSHGAHSHDQGHAAHDHGNEHKHDHGHDHVHGPGCDHDHDHDHGHHHDHKHD). Over residues 147 to 193 (HSHDQGHAAHDHGNEHKHDHGHDHVHGPGCDHDHDHDHGHHHDHKHD) the composition is skewed to basic and acidic residues.

Belongs to the UreE family.

The protein resides in the cytoplasm. Involved in urease metallocenter assembly. Binds nickel. Probably functions as a nickel donor during metallocenter assembly. The chain is Urease accessory protein UreE from Rhizobium leguminosarum bv. trifolii (strain WSM2304).